The following is a 384-amino-acid chain: AIAAVITFLILFTIFGNALVILAVLTSRSLRAPQNLFLVSLAAADILVATLIIPFSLANELLGYWYFRRTWCEVYLALDVLFCTSSIVHLCAISLDRYWAVSRALQYNSKRTPRRIKCVILTVWLIAAAISLPPLIYKGDQGPQPRGRPQCKLNQEAWYILSSSIGSFFAPCLIMILVYLRIYLIAKRSNRRGPRAKGAPREGEPKQPHPLPAGPSALANSPTLASSLAVTGEANGHSEPPGEKERETPEDPGTLTLPPSWPVLPNSGQGQKEGVCGASPEEEEECGSPAVPASPALACSPPLQQPKGSRVLATLRGQVLLGRGVGTAGGQWWRRRAQLTREKRFTFVLAVVIGVFVLCWFPFFFSYSLGAICPQHCKVPHGLF.

The helical transmembrane segment at 1-25 threads the bilayer; the sequence is AIAAVITFLILFTIFGNALVILAVL. The Cytoplasmic segment spans residues 26-36; sequence TSRSLRAPQNL. A helical membrane pass occupies residues 37-62; it reads FLVSLAAADILVATLIIPFSLANELL. The Extracellular portion of the chain corresponds to 63 to 72; sequence GYWYFRRTWC. Residues Cys-72 and Cys-151 are joined by a disulfide bond. A helical transmembrane segment spans residues 73–95; sequence EVYLALDVLFCTSSIVHLCAISL. Residues 96-117 are Cytoplasmic-facing; it reads DRYWAVSRALQYNSKRTPRRIK. The chain crosses the membrane as a helical span at residues 118–140; that stretch reads CVILTVWLIAAAISLPPLIYKGD. Residues 141–156 are Extracellular-facing; it reads QGPQPRGRPQCKLNQE. A helical membrane pass occupies residues 157–180; the sequence is AWYILSSSIGSFFAPCLIMILVYL. Over 181-348 the chain is Cytoplasmic; sequence RIYLIAKRSN…LTREKRFTFV (168 aa). The segment at 192–289 is disordered; that stretch reads RGPRAKGAPR…PEEEEECGSP (98 aa). Polar residues predominate over residues 218-229; the sequence is LANSPTLASSLA. Positions 240 to 249 are enriched in basic and acidic residues; sequence PPGEKERETP. A helical membrane pass occupies residues 349–372; it reads LAVVIGVFVLCWFPFFFSYSLGAI. Over 373-381 the chain is Extracellular; the sequence is CPQHCKVPH. Residues 382-384 traverse the membrane as a helical segment; the sequence is GLF.

The protein belongs to the G-protein coupled receptor 1 family. Adrenergic receptor subfamily. ADRA2B sub-subfamily. In terms of assembly, interacts with RAB26. Interacts with PPP1R9B. Interacts with GGA1, GGA2 and GGA3.

Its subcellular location is the cell membrane. Its function is as follows. Alpha-2 adrenergic receptors mediate the catecholamine-induced inhibition of adenylate cyclase through the action of G proteins. The chain is Alpha-2B adrenergic receptor (ADRA2B) from Elephas maximus (Indian elephant).